The sequence spans 274 residues: Large ribosomal subunit protein uL2 (274 aa).

A disordered region spans residues 223–258 (VAMNPVDHPHGGGEGRTSGGRHPVTPWGIPTKGYKT).

Belongs to the universal ribosomal protein uL2 family. Part of the 50S ribosomal subunit. Forms a bridge to the 30S subunit in the 70S ribosome.

Functionally, one of the primary rRNA binding proteins. Required for association of the 30S and 50S subunits to form the 70S ribosome, for tRNA binding and peptide bond formation. It has been suggested to have peptidyltransferase activity; this is somewhat controversial. Makes several contacts with the 16S rRNA in the 70S ribosome. In Pelobacter propionicus (strain DSM 2379 / NBRC 103807 / OttBd1), this protein is Large ribosomal subunit protein uL2.